Reading from the N-terminus, the 506-residue chain is Histidine ammonia-lyase (506 aa).

The 5-imidazolinone (Ala-Gly) cross-link spans 143-145; that stretch reads ASG. S144 carries the post-translational modification 2,3-didehydroalanine (Ser).

The protein belongs to the PAL/histidase family. Post-translationally, contains an active site 4-methylidene-imidazol-5-one (MIO), which is formed autocatalytically by cyclization and dehydration of residues Ala-Ser-Gly.

Its subcellular location is the cytoplasm. The catalysed reaction is L-histidine = trans-urocanate + NH4(+). It functions in the pathway amino-acid degradation; L-histidine degradation into L-glutamate; N-formimidoyl-L-glutamate from L-histidine: step 1/3. This Salmonella choleraesuis (strain SC-B67) protein is Histidine ammonia-lyase.